A 101-amino-acid polypeptide reads, in one-letter code: Small ribosomal subunit protein uS14 (101 aa).

Positions 1 to 10 (MAKKSSIEKN) are enriched in basic and acidic residues. The interval 1 to 23 (MAKKSSIEKNNRRRKMTKNAAPK) is disordered. Residues 11–23 (NRRRKMTKNAAPK) are compositionally biased toward basic residues.

This sequence belongs to the universal ribosomal protein uS14 family. In terms of assembly, part of the 30S ribosomal subunit. Contacts proteins S3 and S10.

Binds 16S rRNA, required for the assembly of 30S particles and may also be responsible for determining the conformation of the 16S rRNA at the A site. This is Small ribosomal subunit protein uS14 from Rhodopseudomonas palustris (strain BisB5).